The primary structure comprises 692 residues: Elongation factor G (692 aa).

The tr-type G domain maps to 8–282 (EKTRNIGIMA…AVLDYLPAPT (275 aa)). GTP is bound by residues 17-24 (AHIDAGKT), 81-85 (DTPGH), and 135-138 (NKMD). Ser213, Ser302, Ser569, and Ser680 each carry phosphoserine.

This sequence belongs to the TRAFAC class translation factor GTPase superfamily. Classic translation factor GTPase family. EF-G/EF-2 subfamily. Phosphorylated on threonine residue(s). Phosphorylated by PrkC and dephosphorylated by PrpC, in vitro.

It is found in the cytoplasm. Catalyzes the GTP-dependent ribosomal translocation step during translation elongation. During this step, the ribosome changes from the pre-translocational (PRE) to the post-translocational (POST) state as the newly formed A-site-bound peptidyl-tRNA and P-site-bound deacylated tRNA move to the P and E sites, respectively. Catalyzes the coordinated movement of the two tRNA molecules, the mRNA and conformational changes in the ribosome. This Bacillus subtilis (strain 168) protein is Elongation factor G (fusA).